Consider the following 509-residue polypeptide: ATP synthase subunit alpha (509 aa).

169–176 (GDRQTGKT) contributes to the ATP binding site.

The protein belongs to the ATPase alpha/beta chains family. As to quaternary structure, F-type ATPases have 2 components, CF(1) - the catalytic core - and CF(0) - the membrane proton channel. CF(1) has five subunits: alpha(3), beta(3), gamma(1), delta(1), epsilon(1). CF(0) has three main subunits: a(1), b(2) and c(9-12). The alpha and beta chains form an alternating ring which encloses part of the gamma chain. CF(1) is attached to CF(0) by a central stalk formed by the gamma and epsilon chains, while a peripheral stalk is formed by the delta and b chains.

The protein localises to the cell inner membrane. The catalysed reaction is ATP + H2O + 4 H(+)(in) = ADP + phosphate + 5 H(+)(out). Produces ATP from ADP in the presence of a proton gradient across the membrane. The alpha chain is a regulatory subunit. This chain is ATP synthase subunit alpha, found in Rhizobium etli (strain CIAT 652).